The sequence spans 201 residues: MTQRAGAAMLPSALLLLCVPGCLTVSGPSTVMGAVGESLSVQCRYEEKYKTFNKYWCRQPCLPIWHEMVETGGSEGVVRSDQVIITDHPGDLTFTVTLENLTADDAGKYRCGIATILQEDGLSGFLPDPFFQVQVLVSSASSTENSVKTPASPTRPSQCQGSLPSSTCFLLLPLLKVPLLLSILGAILWVNRPWRTPWTES.

The signal sequence occupies residues 1–24; sequence MTQRAGAAMLPSALLLLCVPGCLT. An Ig-like V-type domain is found at 25 to 123; the sequence is VSGPSTVMGA…ATILQEDGLS (99 aa). Residues 25-168 are Extracellular-facing; the sequence is VSGPSTVMGA…CQGSLPSSTC (144 aa). An intrachain disulfide couples Cys-43 to Cys-111. N-linked (GlcNAc...) asparagine glycosylation occurs at Asn-100. Residues 169–189 traverse the membrane as a helical segment; the sequence is FLLLPLLKVPLLLSILGAILW. Topologically, residues 190-201 are cytoplasmic; the sequence is VNRPWRTPWTES.

It belongs to the CD300 family. As to quaternary structure, interacts with TYROBP and HCST. In terms of tissue distribution, expressed on CD16+ monocytes and myeloid dendritic cells (at protein level). By contrast, not detected in lymphocytes nor granulocytes (at protein level).

Its subcellular location is the membrane. It is found in the secreted. May play an important role in innate immunity by mediating a signal for the production of a neutrophil chemoattractant. The protein is Protein CD300H of Homo sapiens (Human).